The primary structure comprises 2599 residues: MESADALVEEQKLMAEAKYRTYMTNIDKALRNFEYSSEWADLISALGKLSKAISSNTQYQVIPRRLKIAKRLAQCMHPALPSGVHLKALETYSVIFSKTGPERLATEFIYSAGLFPLLGYAAMNVRPALLAIYETYFVPLGDKLRPALSGFLNGVLPGYDCGLDHFERISALLKQVCNAVNPMHFYTVLWESVANNAAIRLPAITYLLEHFNKRLDMQEQIYIMGHNREIMMSALCVCLNDSLILVQRNTLEFLLLGFPMHTVLLSEDDLVKLVTNGLNTILRRDMSLNRRLFSWLLGSEVAKNSPTYDTLSLDTSNAPLEEEPEPYFVKHSRHILIKALITTLRLSLECAPMDLKPYRIMLSLLDKAEIGSAVLDYVLHDIIRAMYISSGNAEALKSANLLFATFDPAYIWSYMTNMFEKACQQANSMQEKSQAGETSGKYACDVGSGDPCVLEICVLTEFLLETVSLEMYTETTRVYLPKVFLAITQLLSLHMDHISSNEITASLKLCMKIVSRVQPMITSPIKLNKLIEQSGGSSSDEKITMNSASDAGKTEAGAQGNSLEKSKSDSRLNQFAENTLHSADPNDEELIHRSASNQSVGRQSPNKKKAKSISRLSELDKDISASDTGQQSSSDLDTPRSIKKLKAKAKVPFIRSPKKQRPKDMVLIQSNTSAEVSDGPSAEEPKSAPPDQTPQFQLDEESRATQQRGFSILEKCIRQYEIFFEVYLSRKLLHIESEPKECSVKVQLQRTTSTIHTSNLFMAEQVLDHECPVRESQIERLFNLLRVDIVPRSKQLQRLLNRSLPLPASASELSSDSEAQEEKQQSLLIDGQTQRSVQQLAELQLSPSLRGAVKLAATLLVEMSTFPNCNKHVVLDKNEPELPNWLKVLCLVACFAQSDKELQVASITTLFDLISLLRSQIEHTTSPGVTFVVMLPLLKFGHVSYMEQHTRVFQLVSSILWDYLGTAGIDPAQIAALLHQLHSCLESGLVETVIGNRMQSQHLLQMQSQSRSDLGKAAIRNFQMERLAEAQLLCPTESTERLRESQARSFKKFELLWHLGRDKQTARGFEKTLLKVLDTLALPHYMSERTFVTNWLQASLLRGDLARLTKPLYKILLSASSKRVGIVHMQQLYRESETEVTPAFERDVYAISSEQGNVKYHHMETSSGNKKKSPIRNFPKKIFGVTLSGGKANKVSNFVSDKSTVATCSEATQDMNTIGLIINPLENANDFDDETDLEEPRIEIPHKETPLEQKLASAMDESEQPSQEQPANQPDNSLQYDQDITDHSDSSDFESDSELRETSIEKEDSITVSSSAGVSDDVKRFVGDCESVTDALTQHEKIKSRKTYRLTREKTPGENSLNSLEQKDHDSISELQADALPADEYFREDKKLGKRKKVLTSGEKKRLSCISKTSTDSNISGSHVEQPEQEEETEPGTESTINVEDKRRNLSLETSKLQPDMQKTLEKGKQNVEILRQNNAAAAAAAAAAAEEQISVRSSMKSTVSLTDAAHLYHNHLLIYLAIYDTRQTLYALQTLRNIICCDKRTFLCLSITTSFSSASLKQLLVRHRKSISGKGFDGSVGNSEYAQGYRGCMQLELLVTLCLFYARGYFQKESLDAQRQSPTLQDIVNNRRIQLESIELLTLICSELIEIVKGMGRGLANYIADLLARAKLQKVMLHCLNSSVCSYGLKGNTNSGSYAEQVLSFNDPQDDQLHADCFQLQLLRLLLAVIRLEHEVHQLRQDTPPAAGEDSAGNASPTRLAEGATANVKYLPNCLISQQPMFLAAVLGALQQERLRHLHRNWTDLVTSSLNCFSFGSLTNIVISVVHQLCSNLDRISKMGLPQQRHFPPDYVVSQLEALTILCHYCLLDNTQQTALSHLFNQAYPQTSSSAQSSSTGQLLNSIVHSFLSASESSTSAPAPRNPQLQAARNAVLSHLPRIMSSVAAIWDSELGQLRPVRQQLLEFLSPVSLHHGSNFLAAVAVTWQQRGIATNMNGLSIAEQFQRNSVLQACPAQLSLVSLVSSIRVMPMDSFVMTLHHVVRSPPPIHRPPAQLSIEVSALELFYFYMKSAPAPQLADAWSSLLALIRDGLNLTPPAQFALLMLLNEFVQRCPQMPFQDKKEVRELHDVTSRLVDSLSSVAGSCLEQTTWLRRNLAVKEDTDGLAKDNSVGGGGLQQYSLQAQSVLAAILSNLLDVAYGSQEKDKVVNIVTPLLYNITPYLKNHTARNVPFFYACSALLASLSGYQYTRKAWRKDMLDLLLDNAFFQMHLSCLPFWRMIMDSLMTYDNTTFRELMTRVSLSQAGSLNIFTSRDQEYEQRAMLLKRLAFVIYCSEFDQHNKYMPDIQEQLANSLRLVPMGPSVQAAVFLCFRVLLLRMSPDHVTSLWPIIIAEMVQVFLQMEQELKSESEERNQQLRLPSGIDVSWSAASGASNGYNSQTPMQHWRSVQLEACKLLELGCVLPATKLPHFQMYRWAFVGTEFDVHEEEVCLPNGSLENLATLPSALYVPHVRRVARLMDMKYTSQSPILQRPSNRHLMLHFQQLQSLQELYAFFTTLGISCPQPRNFADTENDVANCLKEIEEVLANDFLEKLPSITTPR.

Disordered stretches follow at residues 532-571 and 595-701; these read EQSG…SDSR and ASNQ…LDEE. 3 stretches are compositionally biased toward polar residues: residues 534–549, 595–604, and 625–636; these read SGGS…NSAS, ASNQSVGRQS, and ASDTGQQSSSDL. Ser-753 carries the phosphoserine modification. Residues 1240 to 1251 show a composition bias toward basic and acidic residues; sequence PRIEIPHKETPL. Disordered stretches follow at residues 1240–1316 and 1347–1368; these read PRIE…SSSA and TYRL…EQKD. Over residues 1264 to 1282 the composition is skewed to polar residues; the sequence is QPSQEQPANQPDNSLQYDQ. The span at 1297-1309 shows a compositional bias: basic and acidic residues; it reads SELRETSIEKEDS. The residue at position 1355 (Thr-1355) is a Phosphothreonine. Phosphoserine is present on residues Ser-1360, Ser-1363, and Ser-1371. A disordered region spans residues 1409-1442; that stretch reads CISKTSTDSNISGSHVEQPEQEEETEPGTESTIN. The segment covering 1410 to 1423 has biased composition (polar residues); it reads ISKTSTDSNISGSH. Ser-2525 carries the post-translational modification Phosphoserine.

It belongs to the DOP1 family.

Its subcellular location is the golgi apparatus membrane. Functionally, may be involved in protein traffic between late Golgi and early endosomes. In Drosophila melanogaster (Fruit fly), this protein is Protein DOP1 homolog.